Reading from the N-terminus, the 336-residue chain is UPF0324 membrane protein PM1461 (336 aa).

10 helical membrane passes run 5–23 (TLFL…VNLL), 30–52 (LNAN…NTFY), 62–84 (GVIF…RLTL), 91–113 (GINA…LWLG), 123–140 (IVYL…AAIM), 153–175 (VSIA…PLMY), 221–238 (MIRV…SWLL), 250–271 (ISIP…FSLI), 275–297 (IVAW…LGLT), and 310–332 (PLIL…NVGI).

The protein belongs to the UPF0324 family.

The protein localises to the cell membrane. In Pasteurella multocida (strain Pm70), this protein is UPF0324 membrane protein PM1461.